A 188-amino-acid chain; its full sequence is Ribonuclease HII (188 aa).

An RNase H type-2 domain is found at 6 to 188; that stretch reads KPLCGIDEAG…VKGLDEPTLF (183 aa). A divalent metal cation contacts are provided by Asp-12, Glu-13, and Asp-99.

The protein belongs to the RNase HII family. Mn(2+) serves as cofactor. It depends on Mg(2+) as a cofactor.

Its subcellular location is the cytoplasm. The enzyme catalyses Endonucleolytic cleavage to 5'-phosphomonoester.. Functionally, endonuclease that specifically degrades the RNA of RNA-DNA hybrids. This is Ribonuclease HII from Sulfurovum sp. (strain NBC37-1).